Here is a 319-residue protein sequence, read N- to C-terminus: Pre T-cell antigen receptor alpha (319 aa).

An N-terminal signal peptide occupies residues 1 to 16 (MAESWLLLLLALGCPA). The Extracellular segment spans residues 17-160 (LPTEVTTLLR…LRGTRALVLR (144 aa)). A disulfide bridge links cysteine 58 with cysteine 118. Asparagine 78 is a glycosylation site (N-linked (GlcNAc...) asparagine). The chain crosses the membrane as a helical span at residues 161–181 (LGALRLLLFKLLLLDVLLTCG). At 182-319 (RLHAPPAARG…PPADPSFPGG (138 aa)) the chain is on the cytoplasmic side. The segment covering 189-207 (ARGDPAGASGPGAPSLPAP) has biased composition (low complexity). The interval 189–293 (ARGDPAGASG…VLRAWSSGPS (105 aa)) is disordered. The segment covering 260 to 271 (RRRRVHTRRPRR) has biased composition (basic residues).

Heterodimer with TCRB; disulfide linked. This heterodimer assembles with CD3 proteins into a signaling-competent pre-T-cell receptor complex. Interacts with RHBDD1.

It is found in the membrane. It localises to the cell membrane. Its function is as follows. Component of the pre-T-cell receptor complex (composed of PTCRA, TCRB and the CD3 complex) that has a crucial role in early T-cell development, particularly alpha-beta T cell differentiation. In Bos taurus (Bovine), this protein is Pre T-cell antigen receptor alpha (PTCRA).